Here is a 107-residue protein sequence, read N- to C-terminus: Integration host factor subunit beta (107 aa).

The disordered stretch occupies residues 56 to 107; sequence RPARVGRNPKSGEKVQVPEKFVPHFKPGKELRERVDGRAGEPLKADDPDDER. Positions 82–101 are enriched in basic and acidic residues; the sequence is PGKELRERVDGRAGEPLKAD.

Belongs to the bacterial histone-like protein family. In terms of assembly, heterodimer of an alpha and a beta chain.

Its function is as follows. This protein is one of the two subunits of integration host factor, a specific DNA-binding protein that functions in genetic recombination as well as in transcriptional and translational control. The sequence is that of Integration host factor subunit beta from Burkholderia vietnamiensis (strain G4 / LMG 22486) (Burkholderia cepacia (strain R1808)).